Reading from the N-terminus, the 469-residue chain is Cytosolic beta-glucosidase (469 aa).

Positions 17, 120, and 164 each coordinate substrate. Residue Glu165 is the Proton donor of the active site. Position 309 (Tyr309) interacts with substrate. The active-site Nucleophile is Glu373. Substrate-binding positions include Trp417 and 424–425; that span reads EW.

The protein belongs to the glycosyl hydrolase 1 family. Klotho subfamily. In terms of assembly, may interact with NEU2. The N-terminus is blocked. As to expression, present in small intestine (at protein level). Expressed in liver, small intestine, colon, spleen and kidney. Down-regulated in renal cell carcinomas and hepatocellular carcinomas.

It localises to the cytoplasm. Its subcellular location is the cytosol. The catalysed reaction is Hydrolysis of terminal, non-reducing beta-D-glucosyl residues with release of beta-D-glucose.. It catalyses the reaction a beta-D-glucosyl-(1&lt;-&gt;1')-N-acylsphing-4-enine + H2O = an N-acylsphing-4-enine + D-glucose. The enzyme catalyses a beta-D-galactosyl-(1&lt;-&gt;1')-N-acylsphing-4-enine + H2O = an N-acylsphing-4-enine + D-galactose. It carries out the reaction beta-D-glucosyl-(1&lt;-&gt;1)-sphing-4-enine + H2O = sphing-4-enine + D-glucose. The catalysed reaction is beta-D-glucosyl-(1&lt;-&gt;1)-N-octadecanoylsphing-4-enine + H2O = N-octadecanoylsphing-4-enine + D-glucose. It catalyses the reaction beta-D-galactosyl-(1&lt;-&gt;1)-sphing-4-enine + H2O = sphing-4-enine + D-galactose. The enzyme catalyses beta-D-galactosyl-(1&lt;-&gt;1')-N-octadecanoylsphing-4-enine + H2O = N-octadecanoylsphing-4-enine + D-galactose. It carries out the reaction a beta-D-xylosyl-(1&lt;-&gt;1')-N-acylsphing-4-enine + cholesterol = cholesteryl 3-beta-D-xyloside + an N-acylsphing-4-enine. Inhibited by 2,4-dinitrophenyl-2-fluoro-2-deoxy-beta-D-glucopyranoside. Inhibited by sodium taurocholate. Inhibited by alpha-1-C-nonyl-DIX/AnDIX. The glucosylceramidase activity is slightly inhibited by conduritol B epoxide/CBE while the galactosylceramidase activity is not. Neutral cytosolic beta-glycosidase with a broad substrate specificity that could play a role in the catabolism of glycosylceramides. Has a significant glucosylceramidase activity in vitro. However, that activity is relatively low and its significance in vivo is not clear. Hydrolyzes galactosylceramides/GalCers, glucosylsphingosines/GlcSphs and galactosylsphingosines/GalSphs. However, the in vivo relevance of these activities is unclear. It can also hydrolyze a broad variety of dietary glycosides including phytoestrogens, flavonols, flavones, flavanones and cyanogens in vitro and could therefore play a role in the metabolism of xenobiotics. Possesses transxylosylase activity in vitro using xylosylated ceramides/XylCers (such as beta-D-xylosyl-(1&lt;-&gt;1')-N-acylsphing-4-enine) as xylosyl donors and cholesterol as acceptor. Could also play a role in the catabolism of cytosolic sialyl free N-glycans. In Homo sapiens (Human), this protein is Cytosolic beta-glucosidase.